Consider the following 1097-residue polypeptide: RecBCD enzyme subunit RecC (1097 aa).

It belongs to the RecC family. Heterotrimer of RecB, RecC and RecD. All subunits contribute to DNA-binding.

Its function is as follows. A helicase/nuclease that prepares dsDNA breaks (DSB) for recombinational DNA repair. Binds to DSBs and unwinds DNA via a highly rapid and processive ATP-dependent bidirectional helicase activity. Holoenzyme degrades any linearized DNA that is unable to undergo homologous recombination. In the holoenzyme this subunit recognizes the wild-type Chi sequence, and when added to isolated RecB increases its ATP-dependent helicase processivity. Unlike the case in E.coli, suppresses RecA-dependent homologous recombination, is instead required for single-strand annealing pathway repair of DSB. This chain is RecBCD enzyme subunit RecC, found in Mycobacterium tuberculosis (strain CDC 1551 / Oshkosh).